Consider the following 419-residue polypeptide: Gamma-glutamyl phosphate reductase (419 aa).

Belongs to the gamma-glutamyl phosphate reductase family.

It is found in the cytoplasm. It catalyses the reaction L-glutamate 5-semialdehyde + phosphate + NADP(+) = L-glutamyl 5-phosphate + NADPH + H(+). Its pathway is amino-acid biosynthesis; L-proline biosynthesis; L-glutamate 5-semialdehyde from L-glutamate: step 2/2. In terms of biological role, catalyzes the NADPH-dependent reduction of L-glutamate 5-phosphate into L-glutamate 5-semialdehyde and phosphate. The product spontaneously undergoes cyclization to form 1-pyrroline-5-carboxylate. The sequence is that of Gamma-glutamyl phosphate reductase from Bordetella bronchiseptica (strain ATCC BAA-588 / NCTC 13252 / RB50) (Alcaligenes bronchisepticus).